Consider the following 336-residue polypeptide: GTPase Obg (336 aa).

The region spanning 1-159 (MKFLDQAKIY…RWVWLRLKLI (159 aa)) is the Obg domain. Residues 160–328 (ADIGLVGLPN…LLRLLQDRVT (169 aa)) enclose the OBG-type G domain. GTP-binding positions include 166 to 173 (GLPNAGKS), 191 to 195 (FTTLH), 213 to 216 (DIPG), 280 to 283 (NKCD), and 309 to 311 (SGA). 2 residues coordinate Mg(2+): serine 173 and threonine 193.

It belongs to the TRAFAC class OBG-HflX-like GTPase superfamily. OBG GTPase family. As to quaternary structure, monomer. Requires Mg(2+) as cofactor.

The protein resides in the cytoplasm. Its function is as follows. An essential GTPase which binds GTP, GDP and possibly (p)ppGpp with moderate affinity, with high nucleotide exchange rates and a fairly low GTP hydrolysis rate. Plays a role in control of the cell cycle, stress response, ribosome biogenesis and in those bacteria that undergo differentiation, in morphogenesis control. The sequence is that of GTPase Obg from Gluconobacter oxydans (strain 621H) (Gluconobacter suboxydans).